We begin with the raw amino-acid sequence, 302 residues long: Probable E3 ubiquitin-protein ligase RZFP34 (302 aa).

The CHY-type zinc finger occupies 54–130 (EGIMQYGCAH…VRQVCISCGV (77 aa)). Residues cysteine 61, histidine 63, cysteine 74, cysteine 75, cysteine 81, cysteine 84, histidine 85, histidine 100, cysteine 112, cysteine 115, cysteine 125, cysteine 128, cysteine 137, cysteine 140, histidine 153, cysteine 154, cysteine 157, cysteine 160, histidine 170, cysteine 171, cysteine 174, cysteine 177, histidine 186, and cysteine 188 each contribute to the Zn(2+) site. The CTCHY-type zinc-finger motif lies at 132-196 (MGKYFCEVCK…ACVEGAMHHD (65 aa)). The segment at 197–240 (CPICFEYLFESTNDVSVLPCGHTIHVKCLREMEEHCQFACPLCS) adopts an RING-type; atypical zinc-finger fold.

The protein localises to the nucleus. The catalysed reaction is S-ubiquitinyl-[E2 ubiquitin-conjugating enzyme]-L-cysteine + [acceptor protein]-L-lysine = [E2 ubiquitin-conjugating enzyme]-L-cysteine + N(6)-ubiquitinyl-[acceptor protein]-L-lysine.. Its pathway is protein modification; protein ubiquitination. Possesses transactivation activity in yeast cells. Involved in the regulation of stomatal aperture. May modulate the expression of genes that control stomata opening during heat shock or drought stress. In Oryza sativa subsp. japonica (Rice), this protein is Probable E3 ubiquitin-protein ligase RZFP34.